We begin with the raw amino-acid sequence, 210 residues long: Uridine kinase (210 aa).

12–19 (GGSGGGKT) provides a ligand contact to ATP.

This sequence belongs to the uridine kinase family.

It is found in the cytoplasm. It carries out the reaction uridine + ATP = UMP + ADP + H(+). The enzyme catalyses cytidine + ATP = CMP + ADP + H(+). Its pathway is pyrimidine metabolism; CTP biosynthesis via salvage pathway; CTP from cytidine: step 1/3. The protein operates within pyrimidine metabolism; UMP biosynthesis via salvage pathway; UMP from uridine: step 1/1. The protein is Uridine kinase of Streptococcus gordonii (strain Challis / ATCC 35105 / BCRC 15272 / CH1 / DL1 / V288).